Here is a 438-residue protein sequence, read N- to C-terminus: Transmembrane protein 184C (438 aa).

7 helical membrane passes run 17-37 (LVAVIYLVSIVVAVPLCVWEL), 48-68 (AWFIAGIFLLLTIPISLWVIL), 86-106 (ILWMVPIYSLDSWIALKYPGI), 179-199 (YTVVRPFTTIVALICELLGIY), 212-232 (YLVIINNMSQLFAMYCLLLFY), 254-274 (VVFVSFWQAVVIALLVKVGVI), and 287-307 (AVATGLQDFIICIEMFLAAIA). A disordered region spans residues 358–438 (PRKKLFPEDQ…KEPSDKSVDS (81 aa)). 2 stretches are compositionally biased toward low complexity: residues 374-390 (SLLSSSSQDAISIASSM) and 404-413 (TVTPQTTPTT). At serine 422 the chain carries Phosphoserine. Residues 425–438 (IGEKKEPSDKSVDS) show a composition bias toward basic and acidic residues.

Belongs to the TMEM184 family.

Its subcellular location is the membrane. Possible tumor suppressor which may play a role in cell growth. This is Transmembrane protein 184C (TMEM184C) from Pongo abelii (Sumatran orangutan).